We begin with the raw amino-acid sequence, 103 residues long: Large ribosomal subunit protein uL24 (103 aa).

Belongs to the universal ribosomal protein uL24 family. Part of the 50S ribosomal subunit.

One of two assembly initiator proteins, it binds directly to the 5'-end of the 23S rRNA, where it nucleates assembly of the 50S subunit. Functionally, one of the proteins that surrounds the polypeptide exit tunnel on the outside of the subunit. This Ruthia magnifica subsp. Calyptogena magnifica protein is Large ribosomal subunit protein uL24.